The primary structure comprises 239 residues: Phosphoribosylaminoimidazole-succinocarboxamide synthase (239 aa).

Belongs to the SAICAR synthetase family.

The catalysed reaction is 5-amino-1-(5-phospho-D-ribosyl)imidazole-4-carboxylate + L-aspartate + ATP = (2S)-2-[5-amino-1-(5-phospho-beta-D-ribosyl)imidazole-4-carboxamido]succinate + ADP + phosphate + 2 H(+). It participates in purine metabolism; IMP biosynthesis via de novo pathway; 5-amino-1-(5-phospho-D-ribosyl)imidazole-4-carboxamide from 5-amino-1-(5-phospho-D-ribosyl)imidazole-4-carboxylate: step 1/2. This Bacillus cereus (strain B4264) protein is Phosphoribosylaminoimidazole-succinocarboxamide synthase.